The chain runs to 297 residues: HTH-type transcriptional regulator ArgP (297 aa).

The HTH lysR-type domain maps to 4 to 60 (PDYRTLQALDAVIRERGFERAAQKLCITQSAVSQRIKQLENMFGQPLLVRTVPPRPT). The segment at residues 21 to 40 (FERAAQKLCITQSAVSQRIK) is a DNA-binding region (H-T-H motif).

It belongs to the LysR transcriptional regulatory family. In terms of assembly, homodimer.

In terms of biological role, controls the transcription of genes involved in arginine and lysine metabolism. This Citrobacter koseri (strain ATCC BAA-895 / CDC 4225-83 / SGSC4696) protein is HTH-type transcriptional regulator ArgP.